We begin with the raw amino-acid sequence, 496 residues long: tRNA-2-methylthio-N(6)-dimethylallyladenosine synthase (496 aa).

Positions 43 to 160 constitute an MTTase N-terminal domain; it reads KKVFVTTQGC…LPELYDQSHQ (118 aa). Residues cysteine 52, cysteine 89, cysteine 123, cysteine 204, cysteine 208, and cysteine 211 each coordinate [4Fe-4S] cluster. The region spanning 190-422 is the Radical SAM core domain; sequence RVEGFKAFVS…QKVIIDSTLA (233 aa). One can recognise a TRAM domain in the interval 425–493; it reads HEMVGTTTRV…PHMVKGEIEA (69 aa).

This sequence belongs to the methylthiotransferase family. MiaB subfamily. As to quaternary structure, monomer. [4Fe-4S] cluster is required as a cofactor.

Its subcellular location is the cytoplasm. The enzyme catalyses N(6)-dimethylallyladenosine(37) in tRNA + (sulfur carrier)-SH + AH2 + 2 S-adenosyl-L-methionine = 2-methylsulfanyl-N(6)-dimethylallyladenosine(37) in tRNA + (sulfur carrier)-H + 5'-deoxyadenosine + L-methionine + A + S-adenosyl-L-homocysteine + 2 H(+). In terms of biological role, catalyzes the methylthiolation of N6-(dimethylallyl)adenosine (i(6)A), leading to the formation of 2-methylthio-N6-(dimethylallyl)adenosine (ms(2)i(6)A) at position 37 in tRNAs that read codons beginning with uridine. The protein is tRNA-2-methylthio-N(6)-dimethylallyladenosine synthase of Psychrobacter arcticus (strain DSM 17307 / VKM B-2377 / 273-4).